We begin with the raw amino-acid sequence, 136 residues long: MLRTILGSKIHRATVTQADLDYVGSITIDADLVNAAGLIEGEKVAVVDITNGARIETYVITGDAGTGSICINGAAAHLINPGDLVIIMSYLQATDAEARAYQPNIVHVDADNRIVALGNDAGEPIPGSSLLSSRSL.

S25 (schiff-base intermediate with substrate; via pyruvic acid) is an active-site residue. S25 carries the post-translational modification Pyruvic acid (Ser). Residue T57 coordinates substrate. Y58 acts as the Proton donor in catalysis. 73–75 lines the substrate pocket; it reads GAA.

It belongs to the PanD family. As to quaternary structure, heterooctamer of four alpha and four beta subunits. Pyruvate serves as cofactor. Post-translationally, is synthesized initially as an inactive proenzyme, which is activated by self-cleavage at a specific serine bond to produce a beta-subunit with a hydroxyl group at its C-terminus and an alpha-subunit with a pyruvoyl group at its N-terminus.

It localises to the cytoplasm. The enzyme catalyses L-aspartate + H(+) = beta-alanine + CO2. It functions in the pathway cofactor biosynthesis; (R)-pantothenate biosynthesis; beta-alanine from L-aspartate: step 1/1. Catalyzes the pyruvoyl-dependent decarboxylation of aspartate to produce beta-alanine. The sequence is that of Aspartate 1-decarboxylase from Corynebacterium efficiens (strain DSM 44549 / YS-314 / AJ 12310 / JCM 11189 / NBRC 100395).